Consider the following 381-residue polypeptide: MAMHTVRLSPATQLHGGISSNLSPPNRKPNNSIVRYGCGSSKRFRIVTVLASLRENDANGRDNSVRAMEVKKIFEDSPLLPKPLSSNQLTESVSNGSRVRVAYQGVRGAYSESAAEKAYPNCEAVPCEEFDTAFEAVERWLVDRAVLPIENSLGGSIHRNYDLLLRHNLHIVGEVKLAVRHCLLANHGVNIEDLRRVLSHPQALAQCENTLTKLGLVREAVDDTAGAAKQIAFENLNDAAAVASEKAAKIYGLNIVAKDIQDDCDNVTRFLMLAREPIIPGTNRLFKTSIVFSLEEGPGVLFKALAVFALRQINLTKIESRPLRKHPLRASGGLKYFDYLFYVDFEASMADEVAQNALRHLEEFATFLRVLGSYPVDTTML.

Residues M1–S32 form a disordered region. Residues M1–R66 constitute a chloroplast transit peptide. Positions I18 to S32 are enriched in polar residues. One can recognise a Prephenate dehydratase domain in the interval R100–R275. An ACT domain is found at S289 to P375.

Expressed in roots, leaves, stems, flowers and siliques. Most abundant in leaves and seeds.

The protein localises to the plastid. The protein resides in the chloroplast stroma. It catalyses the reaction L-arogenate + H(+) = L-phenylalanine + CO2 + H2O. The enzyme catalyses prephenate + H(+) = 3-phenylpyruvate + CO2 + H2O. The protein operates within amino-acid biosynthesis; L-phenylalanine biosynthesis; L-phenylalanine from L-arogenate: step 1/1. It participates in amino-acid biosynthesis; L-phenylalanine biosynthesis; phenylpyruvate from prephenate: step 1/1. In terms of biological role, converts the prephenate produced from the shikimate-chorismate pathway into phenylalanine. Dehydratase that uses arogenate and prephenate as substrates. Utilzes more efficiently arogenate than prephenate. Required for chloroplast division prior to ARC5, but in an ARC3- and ARC6-dependent manner, especially involved in the Z-ring formation. This is Arogenate dehydratase/prephenate dehydratase 2, chloroplastic from Arabidopsis thaliana (Mouse-ear cress).